Here is a 306-residue protein sequence, read N- to C-terminus: UDP-3-O-acyl-N-acetylglucosamine deacetylase (306 aa).

Residues histidine 79, histidine 238, and aspartate 242 each contribute to the Zn(2+) site. Catalysis depends on histidine 265, which acts as the Proton donor.

This sequence belongs to the LpxC family. Zn(2+) serves as cofactor.

The catalysed reaction is a UDP-3-O-[(3R)-3-hydroxyacyl]-N-acetyl-alpha-D-glucosamine + H2O = a UDP-3-O-[(3R)-3-hydroxyacyl]-alpha-D-glucosamine + acetate. The protein operates within glycolipid biosynthesis; lipid IV(A) biosynthesis; lipid IV(A) from (3R)-3-hydroxytetradecanoyl-[acyl-carrier-protein] and UDP-N-acetyl-alpha-D-glucosamine: step 2/6. Functionally, catalyzes the hydrolysis of UDP-3-O-myristoyl-N-acetylglucosamine to form UDP-3-O-myristoylglucosamine and acetate, the committed step in lipid A biosynthesis. The chain is UDP-3-O-acyl-N-acetylglucosamine deacetylase from Shewanella sediminis (strain HAW-EB3).